Here is a 377-residue protein sequence, read N- to C-terminus: Nitric oxide reductase FlRd-NAD(+) reductase (377 aa).

The protein belongs to the FAD-dependent oxidoreductase family. FAD serves as cofactor.

It is found in the cytoplasm. It carries out the reaction 2 reduced [nitric oxide reductase rubredoxin domain] + NAD(+) + H(+) = 2 oxidized [nitric oxide reductase rubredoxin domain] + NADH. It functions in the pathway nitrogen metabolism; nitric oxide reduction. Functionally, one of at least two accessory proteins for anaerobic nitric oxide (NO) reductase. Reduces the rubredoxin moiety of NO reductase. The chain is Nitric oxide reductase FlRd-NAD(+) reductase from Shigella boydii serotype 18 (strain CDC 3083-94 / BS512).